The chain runs to 157 residues: Probable succinate transporter subunit YjjB (157 aa).

The next 4 helical transmembrane spans lie at 8-28 (FALA…AMVF), 50-70 (MILM…SMLV), 87-107 (VFTV…TAMI), and 129-149 (FLTA…PGLW).

Belongs to the ThrE exporter (TC 2.A.79) family. In terms of assembly, the transporter is composed of YjjB and YjjP.

It is found in the cell inner membrane. Involved in succinate export with YjjP. Both proteins are required for export. In Escherichia coli (strain ATCC 8739 / DSM 1576 / NBRC 3972 / NCIMB 8545 / WDCM 00012 / Crooks), this protein is Probable succinate transporter subunit YjjB.